A 315-amino-acid chain; its full sequence is MGKEPGSTKFQTDFRRHLREQNISGNLVHLLCEIAEASKYVINAVRTGDLGVAGTSNLYGEEQLALDVLSDRILRKRLMYSGVVCNIASEEMDEIFQVTSNPLGMFSVAYDPLDGSSLVDVNLAVGTIVGIYQGDNLLQPGRNMVGAMYILYGPRVSMVYSVGKGVYEFTMNHLMEFTLTREKVQMNPSGDIYSPGGLRKKYTPENEAYIRYLEDKGSKLRYSGGFVPDINQILMKGKGIFMYPALTDSPNGKLRLLFELNPMAYLIEQAGGAATNGCMPILDMQPEGLDQRAPIYIGCKEDVAKATEFLNGACA.

Residues E90, D111, L113, and D114 each contribute to the Mg(2+) site. Substrate is bound by residues 114-117 (DGSS), Y222, and K253. E259 lines the Mg(2+) pocket.

This sequence belongs to the FBPase class 1 family. As to quaternary structure, homotetramer. Mg(2+) is required as a cofactor.

Its subcellular location is the cytoplasm. It catalyses the reaction beta-D-fructose 1,6-bisphosphate + H2O = beta-D-fructose 6-phosphate + phosphate. It functions in the pathway carbohydrate biosynthesis; gluconeogenesis. This Trichlorobacter lovleyi (strain ATCC BAA-1151 / DSM 17278 / SZ) (Geobacter lovleyi) protein is Fructose-1,6-bisphosphatase class 1.